A 72-amino-acid chain; its full sequence is Protein kish-A (72 aa).

Residues methionine 1–serine 26 form the signal peptide. Topologically, residues leucine 27–lysine 53 are extracellular. The N-linked (GlcNAc...) asparagine glycan is linked to asparagine 35. A helical transmembrane segment spans residues serine 54–methionine 71. A topological domain (cytoplasmic) is located at residue glutamine 72.

It belongs to the KISH family.

The protein localises to the golgi apparatus membrane. Involved in the early part of the secretory pathway. This Taeniopygia guttata (Zebra finch) protein is Protein kish-A (TMEM167A).